Reading from the N-terminus, the 186-residue chain is Low amplitude and bright protein LabA (186 aa).

Its function is as follows. Functions in an output pathway of the circadian clock. One of three clock output pathways. Involved in negative feedback regulation of KaiC; deletion leads to overexpression of KaiC protein and decreases the amplitude of the circadian response. Overexpression reduces the expression of circadian genes. The polypeptide is Low amplitude and bright protein LabA (Synechococcus elongatus (strain ATCC 33912 / PCC 7942 / FACHB-805) (Anacystis nidulans R2)).